The chain runs to 209 residues: Ribosomal RNA large subunit methyltransferase E (209 aa).

5 residues coordinate S-adenosyl-L-methionine: G63, W65, D83, D99, and D124. K164 acts as the Proton acceptor in catalysis.

This sequence belongs to the class I-like SAM-binding methyltransferase superfamily. RNA methyltransferase RlmE family.

The protein resides in the cytoplasm. It catalyses the reaction uridine(2552) in 23S rRNA + S-adenosyl-L-methionine = 2'-O-methyluridine(2552) in 23S rRNA + S-adenosyl-L-homocysteine + H(+). Its function is as follows. Specifically methylates the uridine in position 2552 of 23S rRNA at the 2'-O position of the ribose in the fully assembled 50S ribosomal subunit. This is Ribosomal RNA large subunit methyltransferase E from Shewanella halifaxensis (strain HAW-EB4).